Here is a 257-residue protein sequence, read N- to C-terminus: Alcohol dehydrogenase 1 (257 aa).

9-33 (VFVGGLGFIAYEACKYLMNNDLASL) serves as a coordination point for NAD(+). Residue serine 137 coordinates substrate. Tyrosine 150 serves as the catalytic Proton acceptor.

It belongs to the short-chain dehydrogenases/reductases (SDR) family. In terms of assembly, homodimer.

It carries out the reaction a primary alcohol + NAD(+) = an aldehyde + NADH + H(+). The catalysed reaction is a secondary alcohol + NAD(+) = a ketone + NADH + H(+). This chain is Alcohol dehydrogenase 1 (ADH1), found in Ceratitis capitata (Mediterranean fruit fly).